The sequence spans 598 residues: Biotin-dependent acyl-coenzyme A carboxylase alpha3 subunit (598 aa).

A Biotin carboxylation domain is found at 8-452 (RIAKVLVANR…SFSVHTRWIE (445 aa)). The ATP-grasp domain occupies 127-324 (RHIAARAQAP…LVLQQFKIAN (198 aa)). 155 to 216 (AKEHGVPIAI…ERYLDKPRHV (62 aa)) lines the ATP pocket. Residues Glu282, Glu295, and Asn297 each coordinate Mg(2+). Mn(2+) contacts are provided by Glu282, Glu295, and Asn297. The segment at 506–531 (PAGVIRKKPKPRKRGGHTGAATSGDA) is disordered. The segment covering 510 to 521 (IRKKPKPRKRGG) has biased composition (basic residues). In terms of domain architecture, Biotinyl-binding spans 522 to 598 (HTGAATSGDA…TQGTVLAEIK (77 aa)). Lys564 carries the N6-biotinyllysine modification.

In terms of assembly, the biotin-dependent acyl-CoA carboxylase complex is composed of AccA3, which contains the biotin carboxylase (BC) and biotin carboxyl carrier protein (BCCP) domains, and an AccD protein, which contains the carboxyl transferase (CT) domain. It depends on Mg(2+) as a cofactor. Mn(2+) serves as cofactor. The cofactor is biotin.

The catalysed reaction is N(6)-biotinyl-L-lysyl-[protein] + hydrogencarbonate + ATP = N(6)-carboxybiotinyl-L-lysyl-[protein] + ADP + phosphate + H(+). It participates in lipid metabolism; fatty acid biosynthesis. The protein operates within lipid metabolism; mycolic acid biosynthesis. Functionally, component of a biotin-dependent acyl-CoA carboxylase complex. This subunit catalyzes the ATP-dependent carboxylation of the biotin carried by the biotin carboxyl carrier (BCC) domain, resulting in the formation of carboxyl biotin. The sequence is that of Biotin-dependent acyl-coenzyme A carboxylase alpha3 subunit (bccA) from Mycobacterium leprae (strain TN).